The primary structure comprises 632 residues: tRNA uridine 5-carboxymethylaminomethyl modification enzyme MnmG (632 aa).

Residues 15–20 (GAGHAG), isoleucine 127, and serine 182 contribute to the FAD site. 276 to 290 (GPRYCPSIEDKIVRF) is a binding site for NAD(+). Glutamine 373 lines the FAD pocket.

It belongs to the MnmG family. Homodimer. Heterotetramer of two MnmE and two MnmG subunits. It depends on FAD as a cofactor.

It is found in the cytoplasm. NAD-binding protein involved in the addition of a carboxymethylaminomethyl (cmnm) group at the wobble position (U34) of certain tRNAs, forming tRNA-cmnm(5)s(2)U34. The chain is tRNA uridine 5-carboxymethylaminomethyl modification enzyme MnmG from Streptococcus pyogenes serotype M1.